Here is a 24-residue protein sequence, read N- to C-terminus: AEVYNKDGNKLDIYGKAVGLHYFS.

Belongs to the Gram-negative porin family. In terms of assembly, homotrimer.

The protein resides in the cell outer membrane. Forms pores that allow passive diffusion of small molecules across the outer membrane. The protein is Outer membrane protein of Sodalis glossinidius.